The following is a 535-amino-acid chain: MSSLARGISRRRTEVATQVEAAPTGLRPNAVVGVRLAALADQVGAALAEGPAQRAVTEDRTVTGVTLRAQDVSPGDLFAALTGSTTHGARHVGDAIARGAVAVLTDPAGVAEIAGRAAVPVLVHPAPRGVLGGLAATVYGHPSERLTVIGITGTSGKTTTTYLVEAGLRAAGRVAGLIGTIGIRVGGADLPSALTTPEAPTLQAMLAAMVERGVDTVVMEVSSHALALGRVDGTRFAVGAFTNLSRDHLDFHPSMADYFEAKASLFDPDSALRARTAVVCIDDDAGRAMAARAADAITVSAADRPAHWRATDVAPTDAGGQQFTAIDPAGVGHHIGIRLPGRYNVANCLVALAILDTVGVSPEQAVPGLREIRVPGRLEQIDRGQGFLALVDYAHKPEALRSVLTTLAHPDRRLAVVFGAGGDRDPGKRAPMGRIAAQLADLVVVTDDNPRDEDPTAIRREILAGAAEVGGDAQVVEIADRRDAIRHAVAWARPGDVVLIAGKGHETGQRGGGRVRPFDDRVELAAALEALERRA.

Leu67 contacts UDP-N-acetyl-alpha-D-muramoyl-L-alanyl-D-glutamate. Residue 153 to 159 participates in ATP binding; that stretch reads GTSGKTT. UDP-N-acetyl-alpha-D-muramoyl-L-alanyl-D-glutamate-binding positions include 195–196, Ser222, and Arg230; that span reads TT. Lys262 is modified (N6-carboxylysine). Residues Arg424, 448-451, Gly502, and Glu506 contribute to the meso-2,6-diaminopimelate site; that span reads DNPR. Residues 448-451 carry the Meso-diaminopimelate recognition motif motif; the sequence is DNPR.

The protein belongs to the MurCDEF family. MurE subfamily. Mg(2+) is required as a cofactor. Post-translationally, carboxylation is probably crucial for Mg(2+) binding and, consequently, for the gamma-phosphate positioning of ATP.

Its subcellular location is the cytoplasm. The enzyme catalyses UDP-N-acetyl-alpha-D-muramoyl-L-alanyl-D-glutamate + meso-2,6-diaminopimelate + ATP = UDP-N-acetyl-alpha-D-muramoyl-L-alanyl-gamma-D-glutamyl-meso-2,6-diaminopimelate + ADP + phosphate + H(+). It functions in the pathway cell wall biogenesis; peptidoglycan biosynthesis. Catalyzes the addition of meso-diaminopimelic acid to the nucleotide precursor UDP-N-acetylmuramoyl-L-alanyl-D-glutamate (UMAG) in the biosynthesis of bacterial cell-wall peptidoglycan. The chain is UDP-N-acetylmuramoyl-L-alanyl-D-glutamate--2,6-diaminopimelate ligase from Mycobacterium bovis (strain ATCC BAA-935 / AF2122/97).